The primary structure comprises 1088 residues: RNA-directed RNA polymerase (1088 aa).

The RdRp catalytic domain occupies 501–687 (LSYGDVTRFL…AKRYIAGGKI (187 aa)).

The protein belongs to the reoviridae RNA-directed RNA polymerase family. Interacts with VP3 (Potential). Interacts with VP2; this interaction activates VP1. Interacts with NSP5; this interaction is probably necessary for the formation of functional virus factories. Interacts with NSP2; this interaction is weak. It depends on Mg(2+) as a cofactor.

It is found in the virion. It catalyses the reaction RNA(n) + a ribonucleoside 5'-triphosphate = RNA(n+1) + diphosphate. In terms of biological role, RNA-directed RNA polymerase that is involved in both transcription and genome replication. Together with VP3 capping enzyme, forms an enzyme complex positioned near the channels situated at each of the five-fold vertices of the core. Following infection, the outermost layer of the virus is lost, leaving a double-layered particle (DLP) made up of the core and VP6 shell. VP1 then catalyzes the transcription of fully conservative plus-strand genomic RNAs that are extruded through the DLP's channels into the cytoplasm where they function as mRNAs for translation of viral proteins. One copy of each of the viral (+)RNAs is also recruited during core assembly, together with newly synthesized polymerase complexes and VP2. The polymerase of these novo-formed particles catalyzes the synthesis of complementary minus-strands leading to dsRNA formation. To do so, the polymerase specifically recognizes and binds 4 bases 5'-UGUG-3' in the conserved 3'-sequence of plus-strand RNA templates. VP2 presumably activates the autoinhibited VP1-RNA complex to coordinate packaging and genome replication. Once dsRNA synthesis is complete, the polymerase switches to the transcriptional mode, thus providing secondary transcription. The sequence is that of RNA-directed RNA polymerase from Rotavirus A (strain RVA/Pig/United States/Gottfried/1983/G4P2B[6]) (RV-A).